The chain runs to 458 residues: Argininosuccinate lyase (458 aa).

The protein belongs to the lyase 1 family. Argininosuccinate lyase subfamily.

It is found in the cytoplasm. The enzyme catalyses 2-(N(omega)-L-arginino)succinate = fumarate + L-arginine. The protein operates within amino-acid biosynthesis; L-arginine biosynthesis; L-arginine from L-ornithine and carbamoyl phosphate: step 3/3. The chain is Argininosuccinate lyase from Neisseria meningitidis serogroup A / serotype 4A (strain DSM 15465 / Z2491).